The primary structure comprises 835 residues: Involucrin (835 aa).

A compositionally biased stretch (polar residues) spans 1-15 (MSQQHTLPVTLSPAL). Disordered regions lie at residues 1 to 133 (MSQQ…LDQR), 150 to 206 (EQLL…LEVP), 221 to 285 (GQLK…QLKH), 321 to 342 (GQLK…QEGQ), 381 to 428 (GQLK…VPEE), 446 to 486 (LDQQ…LEVP), 501 to 548 (GQLK…VPEE), and 566 to 809 (LDQQ…QPAL). Residues 76 to 91 (EQQQQEPQEQELQQQH) are compositionally biased toward low complexity. Basic and acidic residues-rich tracts occupy residues 92–115 (WEQH…KAQR) and 159–168 (QEQHLKHLEQ). Residues 169–181 (QEGQLELPEQQEG) show a composition bias toward low complexity. Composition is skewed to basic and acidic residues over residues 182–198 (QLKH…HLEQ) and 222–268 (QLKH…HLDQ). 3 stretches are compositionally biased toward low complexity: residues 269-281 (QEGQ…QQEG), 329-341 (QEGQ…QQEG), and 389-401 (QEGQ…QQEG). Basic and acidic residues-rich tracts occupy residues 402-421 (QLKH…HQEG) and 446-464 (LDQQ…KQLE). The segment covering 509–521 (QEGQLELPEQQEG) has biased composition (low complexity). Basic and acidic residues-rich tracts occupy residues 522–541 (QLKH…HQEG), 566–584 (LDQQ…KQLE), and 594–620 (KHLE…EHQE). The segment covering 655-668 (HLVQQEGQLEQQEG) has biased composition (low complexity). A compositionally biased stretch (basic and acidic residues) spans 669–685 (QVEHLEEQVGQLKHLEE). Over residues 693 to 710 (LEQQQGQLEVPEQQVGQP) the composition is skewed to low complexity. Basic and acidic residues-rich tracts occupy residues 711 to 721 (KHLEQEEKQLE), 729 to 738 (QLKHLEKQEA), and 751 to 775 (KHLE…HLEQ). The span at 776-789 (QEGQLKNLEQQKGQ) shows a compositional bias: polar residues.

The protein belongs to the involucrin family. As to quaternary structure, directly or indirectly cross-linked to cornifelin (CNFN). In terms of processing, substrate of transglutaminase. Specific glutamines or lysines are cross-linked to keratins, desmoplakin and to inter involucrin molecules. As to expression, keratinocytes of epidermis and other stratified squamous epithelia.

It localises to the cytoplasm. In terms of biological role, part of the insoluble cornified cell envelope (CE) of stratified squamous epithelia. The polypeptide is Involucrin (IVL) (Pongo pygmaeus (Bornean orangutan)).